The chain runs to 100 residues: Putative pterin-4-alpha-carbinolamine dehydratase (100 aa).

Belongs to the pterin-4-alpha-carbinolamine dehydratase family.

It carries out the reaction (4aS,6R)-4a-hydroxy-L-erythro-5,6,7,8-tetrahydrobiopterin = (6R)-L-erythro-6,7-dihydrobiopterin + H2O. The polypeptide is Putative pterin-4-alpha-carbinolamine dehydratase (Bradyrhizobium sp. (strain ORS 278)).